The following is a 380-amino-acid chain: Queuine tRNA-ribosyltransferase (380 aa).

Asp96 functions as the Proton acceptor in the catalytic mechanism. Substrate contacts are provided by residues 96-100 (DSGGF), Asp150, Gln193, and Gly220. Residues 251-257 (GVGAPDS) form an RNA binding region. Asp270 (nucleophile) is an active-site residue. The tract at residues 275 to 279 (TRIAR) is RNA binding; important for wobble base 34 recognition. Zn(2+)-binding residues include Cys308, Cys310, Cys313, and His339.

This sequence belongs to the queuine tRNA-ribosyltransferase family. Homodimer. Within each dimer, one monomer is responsible for RNA recognition and catalysis, while the other monomer binds to the replacement base PreQ1. Zn(2+) serves as cofactor.

The enzyme catalyses 7-aminomethyl-7-carbaguanine + guanosine(34) in tRNA = 7-aminomethyl-7-carbaguanosine(34) in tRNA + guanine. Its pathway is tRNA modification; tRNA-queuosine biosynthesis. Its function is as follows. Catalyzes the base-exchange of a guanine (G) residue with the queuine precursor 7-aminomethyl-7-deazaguanine (PreQ1) at position 34 (anticodon wobble position) in tRNAs with GU(N) anticodons (tRNA-Asp, -Asn, -His and -Tyr). Catalysis occurs through a double-displacement mechanism. The nucleophile active site attacks the C1' of nucleotide 34 to detach the guanine base from the RNA, forming a covalent enzyme-RNA intermediate. The proton acceptor active site deprotonates the incoming PreQ1, allowing a nucleophilic attack on the C1' of the ribose to form the product. After dissociation, two additional enzymatic reactions on the tRNA convert PreQ1 to queuine (Q), resulting in the hypermodified nucleoside queuosine (7-(((4,5-cis-dihydroxy-2-cyclopenten-1-yl)amino)methyl)-7-deazaguanosine). The chain is Queuine tRNA-ribosyltransferase from Streptococcus thermophilus (strain CNRZ 1066).